We begin with the raw amino-acid sequence, 248 residues long: Carbohydrate deacetylase 2 (248 aa).

Residues His59 and His123 each coordinate Mg(2+).

This sequence belongs to the YdjC deacetylase family. Homodimer. The cofactor is Mg(2+).

In terms of biological role, probably catalyzes the deacetylation of acetylated carbohydrates an important step in the degradation of oligosaccharides. The sequence is that of Carbohydrate deacetylase 2 from Listeria innocua serovar 6a (strain ATCC BAA-680 / CLIP 11262).